Here is a 383-residue protein sequence, read N- to C-terminus: Probable cell wall hydrolase LytN (383 aa).

A signal peptide spans methionine 1–alanine 49. Positions glutamine 175–valine 219 constitute a LysM domain. In terms of domain architecture, Peptidase C51 spans asparagine 241–arginine 378.

The protein resides in the secreted. Functionally, probably involved in peptidoglycan hydrolysis. This chain is Probable cell wall hydrolase LytN (lytN), found in Staphylococcus aureus (strain NCTC 8325 / PS 47).